A 563-amino-acid chain; its full sequence is Arginine--tRNA ligase (563 aa).

A 'HIGH' region motif is present at residues proline 121–histidine 131.

The protein belongs to the class-I aminoacyl-tRNA synthetase family. In terms of assembly, monomer.

The protein resides in the cytoplasm. The catalysed reaction is tRNA(Arg) + L-arginine + ATP = L-arginyl-tRNA(Arg) + AMP + diphosphate. The chain is Arginine--tRNA ligase from Streptococcus pyogenes serotype M18 (strain MGAS8232).